A 249-amino-acid polypeptide reads, in one-letter code: MSQQHDYVIGKNAVIETLKSDRKLYKLWMAENTVKGQAQQVIELAKKQGITIQYVPRKKLDQMVTGQHQGVVAQVAAYEYAELDDLYKAAEEKNEQPFFLILDELEDPHNLGSIMRTADAVGAHGIVIPKRRAVGLTTTVAKASTGAIEHIPVARVTNLARTLEEMKERGIWVVGTDASAREDFRNMDGNMPLALVIGSEGKGMGRLVKEKCDFLIKLPMAGKVTSLNASVAAGLLMYEVYRKRNPVGE.

S-adenosyl-L-methionine is bound by residues G198, L218, and L227.

The protein belongs to the class IV-like SAM-binding methyltransferase superfamily. RNA methyltransferase TrmH family.

The chain is Putative TrmH family tRNA/rRNA methyltransferase YacO (yacO) from Bacillus subtilis (strain 168).